Consider the following 517-residue polypeptide: Aldehyde dehydrogenase X, mitochondrial (517 aa).

Residues 1-17 (MLRFLAPRLLSLQGRTA) constitute a mitochondrion transit peptide. K51 is modified (N6-acetyllysine). K52 bears the N6-acetyllysine; alternate mark. K52 is modified (N6-succinyllysine; alternate). N6-succinyllysine is present on K81. NAD(+) is bound at residue 262–267 (GSTEVG). E285 functions as the Proton acceptor in the catalytic mechanism. C319 acts as the Nucleophile in catalysis. Residues K364, K383, K399, K414, and K426 each carry the N6-acetyllysine; alternate modification. N6-succinyllysine; alternate occurs at positions 364, 383, 399, 414, and 426. K429 bears the N6-acetyllysine mark.

It belongs to the aldehyde dehydrogenase family. In terms of assembly, homotetramer. Liver, testis and to a lesser extent in brain.

The protein localises to the mitochondrion matrix. The enzyme catalyses an aldehyde + NAD(+) + H2O = a carboxylate + NADH + 2 H(+). It participates in alcohol metabolism; ethanol degradation; acetate from ethanol: step 2/2. In terms of biological role, ALDHs play a major role in the detoxification of alcohol-derived acetaldehyde. They are involved in the metabolism of corticosteroids, biogenic amines, neurotransmitters, and lipid peroxidation. The polypeptide is Aldehyde dehydrogenase X, mitochondrial (ALDH1B1) (Homo sapiens (Human)).